A 1272-amino-acid chain; its full sequence is Magnesium-chelatase subunit H (1272 aa).

This sequence belongs to the Mg-chelatase subunit H family.

It catalyses the reaction protoporphyrin IX + Mg(2+) + ATP + H2O = Mg-protoporphyrin IX + ADP + phosphate + 3 H(+). The protein operates within porphyrin-containing compound metabolism; bacteriochlorophyll biosynthesis (light-independent). Involved in bacteriochlorophyll pigment biosynthesis; introduces a magnesium ion into protoporphyrin IX to yield Mg-protoroporphyrin IX. This Chlorobaculum parvum (strain DSM 263 / NCIMB 8327) (Chlorobium vibrioforme subsp. thiosulfatophilum) protein is Magnesium-chelatase subunit H (bchH).